Reading from the N-terminus, the 160-residue chain is MHYFFIIVIWLLSINTAWADCWLQAEKMFNIESELLYAIAQQESAMKPGAIGHNRDGSTDLGLMQINSFHMKRLKKMGISEKQLLQDPCISVIVGASILSDMMKIYGYSWEAVGAYNAGTSPKRSDIRKRYAKKIWENYRKLKGMSAEEKNKRLSIAANK.

An N-terminal signal peptide occupies residues 1–19; it reads MHYFFIIVIWLLSINTAWA.

This sequence belongs to the IagB/IpgF/P19 family.

The polypeptide is Invasion protein IagB (iagB) (Salmonella typhimurium (strain SL1344)).